The primary structure comprises 354 residues: Pyruvate dehydrogenase E1 component subunit alpha (354 aa).

The segment at 1–29 (MAKATQDSNRPHKADVGSAIPNHDLPPIP) is disordered.

In terms of assembly, heterodimer of an alpha and a beta chain. Requires thiamine diphosphate as cofactor.

The catalysed reaction is N(6)-[(R)-lipoyl]-L-lysyl-[protein] + pyruvate + H(+) = N(6)-[(R)-S(8)-acetyldihydrolipoyl]-L-lysyl-[protein] + CO2. In terms of biological role, the pyruvate dehydrogenase complex catalyzes the overall conversion of pyruvate to acetyl-CoA and CO(2). It contains multiple copies of three enzymatic components: pyruvate dehydrogenase (E1), dihydrolipoamide acetyltransferase (E2) and lipoamide dehydrogenase (E3). This Zymomonas mobilis subsp. mobilis (strain ATCC 31821 / ZM4 / CP4) protein is Pyruvate dehydrogenase E1 component subunit alpha (pdhA).